The primary structure comprises 64 residues: Large ribosomal subunit protein bL35 (64 aa).

It belongs to the bacterial ribosomal protein bL35 family.

The chain is Large ribosomal subunit protein bL35 from Pseudomonas savastanoi pv. phaseolicola (strain 1448A / Race 6) (Pseudomonas syringae pv. phaseolicola (strain 1448A / Race 6)).